Consider the following 67-residue polypeptide: Surface composition regulator (67 aa).

It belongs to the GlgS family.

Its function is as follows. Major determinant of cell surface composition. Negatively regulates motility, adhesion and synthesis of biofilm exopolysaccharides. This Salmonella enteritidis PT4 (strain P125109) protein is Surface composition regulator.